The following is a 378-amino-acid chain: Alginate lyase (378 aa).

Positions 1–28 are cleaved as a signal peptide; the sequence is MQTPKLIRPTLLSMAILSSMAWATGASA. Substrate contacts are provided by residues 67-68, 140-141, and Tyr-258; these read SK and HT.

This sequence belongs to the polysaccharide lyase 5 family.

It is found in the periplasm. It catalyses the reaction Eliminative cleavage of alginate to give oligosaccharides with 4-deoxy-alpha-L-erythro-hex-4-enuronosyl groups at their non-reducing ends and beta-D-mannuronate at their reducing end.. With respect to regulation, the monovalent cation sodium enhances activity but is not absolutely required. Catalyzes the depolymerization of alginate by cleaving the beta-1,4 glycosidic bond between two adjacent sugar residues via a beta-elimination mechanism. Degrades deacetylated polymannuronate (polyM) alginate from P.aeruginosa more efficiently than non-deacetylated polyM and alginate from M.pyrifera. AlgL from P.syringae also degrades its own alginate, which may indicate a role in cleaving preformed alginate and/or in determining the length of the alginate polymer. May serve to degrade mislocalized alginate that is trapped in the periplasmic space. This Pseudomonas syringae pv. syringae protein is Alginate lyase.